A 327-amino-acid chain; its full sequence is Annexin A8 (327 aa).

Annexin repeat units lie at residues 21–92 (FNPD…ALMY), 93–164 (PPYR…CLLQ), 177–249 (GLAL…TVVK), and 253–324 (NVHS…NLVG). Ca(2+)-binding residues include M266, G268, G270, and D310.

Belongs to the annexin family.

Functionally, this protein is an anticoagulant protein that acts as an indirect inhibitor of the thromboplastin-specific complex, which is involved in the blood coagulation cascade. In Rattus norvegicus (Rat), this protein is Annexin A8 (Anxa8).